Reading from the N-terminus, the 388-residue chain is Large ribosomal subunit protein uL3A (388 aa).

The span at 1–10 shows a compositional bias: basic and acidic residues; the sequence is MSHCKFEQPR. Residues 1–34 form a disordered region; it reads MSHCKFEQPRHGSLGFLPRKRASRQRGKVKAFPK. Ser-13 carries the post-translational modification Phosphoserine. Basic residues predominate over residues 18–31; the sequence is PRKRASRQRGKVKA. Phosphoserine is present on residues Ser-65, Ser-140, Ser-143, Ser-207, Ser-295, and Ser-355. Thr-372 bears the Phosphothreonine mark.

Belongs to the universal ribosomal protein uL3 family. In terms of assembly, component of the large ribosomal subunit (LSU). Mature yeast ribosomes consist of a small (40S) and a large (60S) subunit. The 40S small subunit contains 1 molecule of ribosomal RNA (18S rRNA) and at least 33 different proteins. The large 60S subunit contains 3 rRNA molecules (25S, 5.8S and 5S rRNA) and at least 46 different proteins. uL3 forms together with ES39L one of the contact sites for the signal recognition particle that targets ribosomes to the endoplasmic reticulum membrane.

Its subcellular location is the cytoplasm. Component of the ribosome, a large ribonucleoprotein complex responsible for the synthesis of proteins in the cell. The small ribosomal subunit (SSU) binds messenger RNAs (mRNAs) and translates the encoded message by selecting cognate aminoacyl-transfer RNA (tRNA) molecules. The large subunit (LSU) contains the ribosomal catalytic site termed the peptidyl transferase center (PTC), which catalyzes the formation of peptide bonds, thereby polymerizing the amino acids delivered by tRNAs into a polypeptide chain. The nascent polypeptides leave the ribosome through a tunnel in the LSU and interact with protein factors that function in enzymatic processing, targeting, and the membrane insertion of nascent chains at the exit of the ribosomal tunnel. uL3 plays a role in coordinating processes of accommodating the aminoacyl-tRNA in the PTC. This Schizosaccharomyces pombe (strain 972 / ATCC 24843) (Fission yeast) protein is Large ribosomal subunit protein uL3A (rpl301).